A 159-amino-acid chain; its full sequence is Antitoxin Xre (159 aa).

The protein belongs to the MbcA/ParS/Xre antitoxin family. Homodimer. Forms a complex with cognate toxin Res; the 2 toxin molecules dimerize and each contacts an Xre homodimer. Most Res-Xre contacts are between the antitoxin molecule closest to the toxin.

Functionally, probable antitoxin component of a type II toxin-antitoxin (TA) system. In vivo probably neutralizes the toxic effect of cognate toxin Res. The sequence is that of Antitoxin Xre from Pseudomonas putida (strain ATCC 47054 / DSM 6125 / CFBP 8728 / NCIMB 11950 / KT2440).